The following is a 212-amino-acid chain: Ribosomal RNA small subunit methyltransferase G (212 aa).

S-adenosyl-L-methionine contacts are provided by residues Gly80, Leu85, 131–132, and Arg146; that span reads AE.

The protein belongs to the methyltransferase superfamily. RNA methyltransferase RsmG family.

It localises to the cytoplasm. The catalysed reaction is guanosine(527) in 16S rRNA + S-adenosyl-L-methionine = N(7)-methylguanosine(527) in 16S rRNA + S-adenosyl-L-homocysteine. Its function is as follows. Specifically methylates the N7 position of guanine in position 527 of 16S rRNA. In Xanthomonas oryzae pv. oryzae (strain KACC10331 / KXO85), this protein is Ribosomal RNA small subunit methyltransferase G.